The chain runs to 340 residues: Ribonucleoside-diphosphate reductase small subunit (340 aa).

The chain crosses the membrane as a helical span at residues 180 to 200; the sequence is FILMILIEGIFFAASFAAIAY.

This sequence belongs to the ribonucleoside diphosphate reductase small chain family. Heterotetramer composed of a homodimer of the large subunit (R1) and a homodimer of the small subunit (R2). Larger multisubunit protein complex are also active, composed of (R1)n(R2)n. Fe cation serves as cofactor.

It is found in the host membrane. The catalysed reaction is a 2'-deoxyribonucleoside 5'-diphosphate + [thioredoxin]-disulfide + H2O = a ribonucleoside 5'-diphosphate + [thioredoxin]-dithiol. Functionally, ribonucleoside-diphosphate reductase holoenzyme provides the precursors necessary for viral DNA synthesis. Allows virus growth in non-dividing cells, as well as reactivation from latency in infected hosts. Catalyzes the biosynthesis of deoxyribonucleotides from the corresponding ribonucleotides. In Human herpesvirus 1 (strain 17) (HHV-1), this protein is Ribonucleoside-diphosphate reductase small subunit.